The sequence spans 66 residues: MAEKKKGKTITVEQIGSPIRRPKEQRATLVGLGLNKLHRRSTLEDTPSVRGMIAKVEHLVRVVDEA.

Belongs to the universal ribosomal protein uL30 family. As to quaternary structure, part of the 50S ribosomal subunit.

This chain is Large ribosomal subunit protein uL30, found in Chelativorans sp. (strain BNC1).